We begin with the raw amino-acid sequence, 277 residues long: Putative phosphoenolpyruvate synthase regulatory protein (277 aa).

157–164 (GVSRSGKT) contributes to the ADP binding site.

It belongs to the pyruvate, phosphate/water dikinase regulatory protein family. PSRP subfamily.

The enzyme catalyses [pyruvate, water dikinase] + ADP = [pyruvate, water dikinase]-phosphate + AMP + H(+). The catalysed reaction is [pyruvate, water dikinase]-phosphate + phosphate + H(+) = [pyruvate, water dikinase] + diphosphate. In terms of biological role, bifunctional serine/threonine kinase and phosphorylase involved in the regulation of the phosphoenolpyruvate synthase (PEPS) by catalyzing its phosphorylation/dephosphorylation. This chain is Putative phosphoenolpyruvate synthase regulatory protein, found in Vibrio atlanticus (strain LGP32) (Vibrio splendidus (strain Mel32)).